We begin with the raw amino-acid sequence, 459 residues long: MPREIITLQAGQCGNSVGQQFWQQLCQEHGINKDGNLEDFATEGGDRKDVFFYQSDDTRYIPRAILLDLEPRVLHSIQASPYKNIYNPENFYIHKDGTGAGNNWGMGYSMGEQVHEDILDMIDREADGSDSLEGFMMLHSIAGGTGSGLGSYMLERLNDRFPKKLIQTYSVFPNTQDGDIVVQPYNSLLSMRRLTQNADSVVVLDNGALTRIAADRLHVMNPSFEQTNQLVSTVMSASTTTLRYPGYMHNDLVGIVASLIPTPRCHFLMTSYTPFSGENVEQAKTVRKTTVLDVMRRLLQPKNRMVSTNPTKKSCYMSILNIIQGEADPSDVHKSLMRIRERRLATFIPWGPASIQVALTKKSPYVTSSHRVSGLMLANHTGIATLFKRIVAQYSTLRKRNAFLESYKREVPFKDGLGEFDEAKEVVQGLIAEYEEAEDADYLTKETAPTDEAEDKRAG.

142–148 (AGGTGSG) is a GTP binding site. Residues 440–459 (ADYLTKETAPTDEAEDKRAG) are disordered.

This sequence belongs to the tubulin family.

It is found in the cytoplasm. Its subcellular location is the cytoskeleton. It localises to the microtubule organizing center. The protein resides in the spindle pole body. Tubulin is the major constituent of microtubules. The gamma chain is found at microtubule organizing centers (MTOC) such as the spindle poles or the centrosome, suggesting that it is involved in the minus-end nucleation of microtubule assembly. This Cochliobolus heterostrophus (strain C5 / ATCC 48332 / race O) (Southern corn leaf blight fungus) protein is Tubulin gamma chain (TUB4).